The sequence spans 258 residues: MTEGIQNVSQPQIKIENLNLWYGEKQALKNVSMQIPKNSITALIGPSGCGKSTFIRCLNRMNDLINNCRIEGKVSIEGKDIYEPDVDAVELRKNVGMVFQKPNPFPMSIYDNVAYGPRIHGANKKDLDGVVEQALRSAAIWDEVSDRLKSPALSLSGGQQQRLCIARTLAVKPKTILFDEPTSALDPISTLRIEDLTMELKKDYTIVIVTHNMQQAARISDYTGFFLMGELIEFDQTRQIFQNPREKSTEDYITGRFG.

Positions 13–253 constitute an ABC transporter domain; that stretch reads IKIENLNLWY…PREKSTEDYI (241 aa). 45-52 provides a ligand contact to ATP; that stretch reads GPSGCGKS.

The protein belongs to the ABC transporter superfamily. Phosphate importer (TC 3.A.1.7) family. The complex is composed of two ATP-binding proteins (PstB), two transmembrane proteins (PstC and PstA) and a solute-binding protein (PstS).

Its subcellular location is the cell membrane. The catalysed reaction is phosphate(out) + ATP + H2O = ADP + 2 phosphate(in) + H(+). Part of the ABC transporter complex PstSACB involved in phosphate import. Responsible for energy coupling to the transport system. The sequence is that of Phosphate import ATP-binding protein PstB from Methanosarcina barkeri (strain Fusaro / DSM 804).